Consider the following 204-residue polypeptide: Holliday junction branch migration complex subunit RuvA (204 aa).

The interval 1–64 (MIGRLQGILL…EDAHLLFGFS (64 aa)) is domain I. The segment at 65-143 (AKTDRTLFRE…GIKQPDFFVE (79 aa)) is domain II. Positions 144–155 (SSHVGAVDPVTT) are flexible linker. The interval 156–204 (SPEVPAEEAVAALMALGYKASDAEKMVKRIAKPHLTSEQLIREALKAAL) is domain III.

The protein belongs to the RuvA family. As to quaternary structure, homotetramer. Forms an RuvA(8)-RuvB(12)-Holliday junction (HJ) complex. HJ DNA is sandwiched between 2 RuvA tetramers; dsDNA enters through RuvA and exits via RuvB. An RuvB hexamer assembles on each DNA strand where it exits the tetramer. Each RuvB hexamer is contacted by two RuvA subunits (via domain III) on 2 adjacent RuvB subunits; this complex drives branch migration. In the full resolvosome a probable DNA-RuvA(4)-RuvB(12)-RuvC(2) complex forms which resolves the HJ.

It localises to the cytoplasm. Its function is as follows. The RuvA-RuvB-RuvC complex processes Holliday junction (HJ) DNA during genetic recombination and DNA repair, while the RuvA-RuvB complex plays an important role in the rescue of blocked DNA replication forks via replication fork reversal (RFR). RuvA specifically binds to HJ cruciform DNA, conferring on it an open structure. The RuvB hexamer acts as an ATP-dependent pump, pulling dsDNA into and through the RuvAB complex. HJ branch migration allows RuvC to scan DNA until it finds its consensus sequence, where it cleaves and resolves the cruciform DNA. The protein is Holliday junction branch migration complex subunit RuvA of Mannheimia succiniciproducens (strain KCTC 0769BP / MBEL55E).